The primary structure comprises 93 residues: Putative regulatory protein Cthe_1316 (93 aa).

Residues 74–93 (RLNTKEAEDVEVDDEEEIDE) are disordered. Residues 81-93 (EDVEVDDEEEIDE) show a composition bias toward acidic residues.

Belongs to the RemA family.

The sequence is that of Putative regulatory protein Cthe_1316 from Acetivibrio thermocellus (strain ATCC 27405 / DSM 1237 / JCM 9322 / NBRC 103400 / NCIMB 10682 / NRRL B-4536 / VPI 7372) (Clostridium thermocellum).